A 281-amino-acid chain; its full sequence is Pantothenate synthetase (281 aa).

Residue 30–37 (MGYLHEGH) participates in ATP binding. The Proton donor role is filled by H37. (R)-pantoate is bound at residue Q61. Q61 provides a ligand contact to beta-alanine. Residue 147 to 150 (GEKD) coordinates ATP. Q153 lines the (R)-pantoate pocket. Residues I176 and 184-187 (KSSR) each bind ATP.

The protein belongs to the pantothenate synthetase family. Homodimer.

The protein resides in the cytoplasm. The catalysed reaction is (R)-pantoate + beta-alanine + ATP = (R)-pantothenate + AMP + diphosphate + H(+). Its pathway is cofactor biosynthesis; (R)-pantothenate biosynthesis; (R)-pantothenate from (R)-pantoate and beta-alanine: step 1/1. In terms of biological role, catalyzes the condensation of pantoate with beta-alanine in an ATP-dependent reaction via a pantoyl-adenylate intermediate. In Clostridium botulinum (strain 657 / Type Ba4), this protein is Pantothenate synthetase.